The sequence spans 342 residues: Anthranilate phosphoribosyltransferase (342 aa).

Residues Gly-84, 87–88 (GD), Thr-92, 94–97 (NIST), 112–120 (KHGNRGVSS), and Ser-124 contribute to the 5-phospho-alpha-D-ribose 1-diphosphate site. Residue Gly-84 participates in anthranilate binding. Mg(2+) is bound at residue Ser-96. Asn-115 lines the anthranilate pocket. An anthranilate-binding site is contributed by Arg-170. Mg(2+)-binding residues include Asp-229 and Glu-230.

It belongs to the anthranilate phosphoribosyltransferase family. Homodimer. It depends on Mg(2+) as a cofactor.

It catalyses the reaction N-(5-phospho-beta-D-ribosyl)anthranilate + diphosphate = 5-phospho-alpha-D-ribose 1-diphosphate + anthranilate. Its pathway is amino-acid biosynthesis; L-tryptophan biosynthesis; L-tryptophan from chorismate: step 2/5. Functionally, catalyzes the transfer of the phosphoribosyl group of 5-phosphorylribose-1-pyrophosphate (PRPP) to anthranilate to yield N-(5'-phosphoribosyl)-anthranilate (PRA). The protein is Anthranilate phosphoribosyltransferase of Cupriavidus metallidurans (strain ATCC 43123 / DSM 2839 / NBRC 102507 / CH34) (Ralstonia metallidurans).